The chain runs to 156 residues: 6,7-dimethyl-8-ribityllumazine synthase (156 aa).

Residues Phe23, Ala57–Glu59, and Ala81–Ile83 contribute to the 5-amino-6-(D-ribitylamino)uracil site. Residue Gly86–Thr87 coordinates (2S)-2-hydroxy-3-oxobutyl phosphate. Residue His89 is the Proton donor of the active site. Position 114 (Phe114) interacts with 5-amino-6-(D-ribitylamino)uracil. Arg128 is a binding site for (2S)-2-hydroxy-3-oxobutyl phosphate.

This sequence belongs to the DMRL synthase family.

The catalysed reaction is (2S)-2-hydroxy-3-oxobutyl phosphate + 5-amino-6-(D-ribitylamino)uracil = 6,7-dimethyl-8-(1-D-ribityl)lumazine + phosphate + 2 H2O + H(+). It functions in the pathway cofactor biosynthesis; riboflavin biosynthesis; riboflavin from 2-hydroxy-3-oxobutyl phosphate and 5-amino-6-(D-ribitylamino)uracil: step 1/2. Its function is as follows. Catalyzes the formation of 6,7-dimethyl-8-ribityllumazine by condensation of 5-amino-6-(D-ribitylamino)uracil with 3,4-dihydroxy-2-butanone 4-phosphate. This is the penultimate step in the biosynthesis of riboflavin. In Helicobacter pylori (strain J99 / ATCC 700824) (Campylobacter pylori J99), this protein is 6,7-dimethyl-8-ribityllumazine synthase.